Consider the following 354-residue polypeptide: Methionine import ATP-binding protein MetN 2 (354 aa).

One can recognise an ABC transporter domain in the interval 6-250 (IELKNISVHF…PQKPLTKEFI (245 aa)). 42 to 49 (GYSGAGKS) lines the ATP pocket.

Belongs to the ABC transporter superfamily. Methionine importer (TC 3.A.1.24) family. In terms of assembly, the complex is composed of two ATP-binding proteins (MetN), two transmembrane proteins (MetI) and a solute-binding protein (MetQ).

It localises to the cell membrane. The enzyme catalyses L-methionine(out) + ATP + H2O = L-methionine(in) + ADP + phosphate + H(+). It carries out the reaction D-methionine(out) + ATP + H2O = D-methionine(in) + ADP + phosphate + H(+). In terms of biological role, part of the ABC transporter complex MetNIQ involved in methionine import. Responsible for energy coupling to the transport system. This Oenococcus oeni (strain ATCC BAA-331 / PSU-1) protein is Methionine import ATP-binding protein MetN 2.